We begin with the raw amino-acid sequence, 138 residues long: uncharacterized protein (138 aa).

This is an uncharacterized protein from Caenorhabditis elegans.